We begin with the raw amino-acid sequence, 70 residues long: Small, acid-soluble spore protein 1 (70 aa).

The protein belongs to the alpha/beta-type SASP family.

Its function is as follows. SASP are bound to spore DNA. They are double-stranded DNA-binding proteins that cause DNA to change to an a-like conformation. They protect the DNA backbone from chemical and enzymatic cleavage and are thus involved in dormant spore's high resistance to UV light. This is Small, acid-soluble spore protein 1 (sasP-1) from Bacillus cereus.